The primary structure comprises 871 residues: Serrate RNA effector molecule homolog (871 aa).

Residues 1–90 (MGDSDDEYDR…RRDWDGHSSD (90 aa)) form a disordered region. At G2 the chain carries N-acetylglycine. S4 is modified (phosphoserine). Position 8 is a phosphotyrosine (Y8). Residues 8-73 (YDRRRRDKFR…ERFSPPRHEL (66 aa)) are compositionally biased toward basic and acidic residues. S67, S74, and S136 each carry phosphoserine. K150 is covalently cross-linked (Glycyl lysine isopeptide (Lys-Gly) (interchain with G-Cter in SUMO2)). The segment at 272–411 (EEEEQAGKPG…KPKDAAGLEC (140 aa)) is disordered. The segment covering 297–347 (DGERKTNDKDEKKEDSKQAENDSSNDDKTKKSEGDGDKEEKKEDSEKEAKK) has biased composition (basic and acidic residues). Residues 370 to 385 (SESESESGQAEEEKEE) are compositionally biased toward acidic residues. Basic and acidic residues predominate over residues 386 to 411 (AEALKEKEKPKEEEWEKPKDAAGLEC). 2 positions are modified to phosphoserine: S492 and S539. At T543 the chain carries Phosphothreonine. At S569 the chain carries Phosphoserine. Positions 574 to 597 (ELLGSSGGAPPEEPPKEGNPAEIN) are disordered. T670 carries the post-translational modification Phosphothreonine. At S678 the chain carries Phosphoserine. R828, R835, and R845 each carry omega-N-methylarginine. Residues 830-849 (NYDAFRGQGGYPGKPRNRMV) form a disordered region.

This sequence belongs to the ARS2 family. In terms of assembly, interacts with CASP8AP2, ERBB4, NCBP1/CBP80 and DROSHA. Interacts with LUZP4. Interacts with NCBP2/CBP20 and NCBP3. Interacts with MTREX.

It localises to the nucleus. The protein resides in the nucleoplasm. The protein localises to the cytoplasm. Its function is as follows. Acts as a mediator between the cap-binding complex (CBC) and the primary microRNAs (miRNAs) processing machinery during cell proliferation. Contributes to the stability and delivery of capped primary miRNA transcripts to the primary miRNA processing complex containing DGCR8 and DROSHA, thereby playing a role in RNA-mediated gene silencing (RNAi) by miRNAs. Binds capped RNAs (m7GpppG-capped RNA); however interaction is probably mediated via its interaction with NCBP1/CBP80 component of the CBC complex. Involved in cell cycle progression at S phase. Does not directly confer arsenite resistance but rather modulates arsenic sensitivity. Independently of its activity on miRNAs, necessary and sufficient to promote neural stem cell self-renewal. Does so by directly binding SOX2 promoter and positively regulating its transcription. This Pongo abelii (Sumatran orangutan) protein is Serrate RNA effector molecule homolog (SRRT).